The chain runs to 316 residues: HPr kinase/phosphorylase (316 aa).

Residues His-143 and Lys-164 contribute to the active site. 158–165 serves as a coordination point for ATP; that stretch reads GEAGSGKS. Ser-165 contacts Mg(2+). The active-site Proton acceptor; for phosphorylation activity. Proton donor; for dephosphorylation activity is Asp-182. Residues 206–215 form an important for the catalytic mechanism of both phosphorylation and dephosphorylation region; sequence LEVRGLGVLN. Mg(2+) is bound at residue Glu-207. Residue Arg-251 is part of the active site. Residues 272–277 form an important for the catalytic mechanism of dephosphorylation region; the sequence is PVMPGR.

The protein belongs to the HPrK/P family. In terms of assembly, homohexamer. The cofactor is Mg(2+).

It catalyses the reaction [HPr protein]-L-serine + ATP = [HPr protein]-O-phospho-L-serine + ADP + H(+). The catalysed reaction is [HPr protein]-O-phospho-L-serine + phosphate + H(+) = [HPr protein]-L-serine + diphosphate. Functionally, catalyzes the ATP- as well as the pyrophosphate-dependent phosphorylation of a specific serine residue in HPr, a phosphocarrier protein of the phosphoenolpyruvate-dependent sugar phosphotransferase system (PTS). HprK/P also catalyzes the pyrophosphate-producing, inorganic phosphate-dependent dephosphorylation (phosphorolysis) of seryl-phosphorylated HPr (P-Ser-HPr). This Stenotrophomonas maltophilia (strain R551-3) protein is HPr kinase/phosphorylase.